The following is a 306-amino-acid chain: Protoheme IX farnesyltransferase (306 aa).

8 consecutive transmembrane segments (helical) span residues 31–50 (VIELLLVTTAPVMILAQGGW), 55–77 (LILGVLVGGTLSAGSANAFNCYI), 104–124 (LVFAWIIGVASIVWLGVISNW), 125–145 (LAAALSLAAILFYVFVYTLWL), 168–188 (WAAVTGDISWAPVILFMIVFL), 218–235 (GRAAVGLQTILYAWATLA), 238–258 (LLLIPVAGMGLVYTLAALAGG), and 286–306 (ASISYLSLLFLAVGIDPLLPF).

It belongs to the UbiA prenyltransferase family. Protoheme IX farnesyltransferase subfamily.

Its subcellular location is the cell membrane. It catalyses the reaction heme b + (2E,6E)-farnesyl diphosphate + H2O = Fe(II)-heme o + diphosphate. It participates in porphyrin-containing compound metabolism; heme O biosynthesis; heme O from protoheme: step 1/1. Converts heme B (protoheme IX) to heme O by substitution of the vinyl group on carbon 2 of heme B porphyrin ring with a hydroxyethyl farnesyl side group. The sequence is that of Protoheme IX farnesyltransferase from Clavibacter michiganensis subsp. michiganensis (strain NCPPB 382).